The sequence spans 386 residues: 2,3,4,5-tetrahydropyridine-2,6-dicarboxylate N-succinyltransferase (386 aa).

Residue Glu-257 is the Acyl-anhydride intermediate of the active site. Residues Arg-259, Gly-274, Ser-277, Ala-300, 315-316 (DA), Gly-323, Lys-349, and 362-365 (RQDS) each bind succinyl-CoA.

Belongs to the type 2 tetrahydrodipicolinate N-succinyltransferase family. As to quaternary structure, homotrimer.

The protein resides in the cytoplasm. It catalyses the reaction (S)-2,3,4,5-tetrahydrodipicolinate + succinyl-CoA + H2O = (S)-2-succinylamino-6-oxoheptanedioate + CoA. Its pathway is amino-acid biosynthesis; L-lysine biosynthesis via DAP pathway; LL-2,6-diaminopimelate from (S)-tetrahydrodipicolinate (succinylase route): step 1/3. Functionally, catalyzes the conversion of the cyclic tetrahydrodipicolinate (THDP) into the acyclic N-succinyl-L-2-amino-6-oxopimelate using succinyl-CoA. The protein is 2,3,4,5-tetrahydropyridine-2,6-dicarboxylate N-succinyltransferase of Campylobacter jejuni subsp. jejuni serotype O:2 (strain ATCC 700819 / NCTC 11168).